A 564-amino-acid polypeptide reads, in one-letter code: Formate--tetrahydrofolate ligase (564 aa).

69 to 76 (TPAGEGKS) contacts ATP.

It belongs to the formate--tetrahydrofolate ligase family.

The enzyme catalyses (6S)-5,6,7,8-tetrahydrofolate + formate + ATP = (6R)-10-formyltetrahydrofolate + ADP + phosphate. Its pathway is one-carbon metabolism; tetrahydrofolate interconversion. This Renibacterium salmoninarum (strain ATCC 33209 / DSM 20767 / JCM 11484 / NBRC 15589 / NCIMB 2235) protein is Formate--tetrahydrofolate ligase.